The primary structure comprises 450 residues: UPF0210 protein MK1214 (450 aa).

The protein belongs to the UPF0210 family.

The sequence is that of UPF0210 protein MK1214 from Methanopyrus kandleri (strain AV19 / DSM 6324 / JCM 9639 / NBRC 100938).